Reading from the N-terminus, the 94-residue chain is Putative pterin-4-alpha-carbinolamine dehydratase (94 aa).

It belongs to the pterin-4-alpha-carbinolamine dehydratase family.

The enzyme catalyses (4aS,6R)-4a-hydroxy-L-erythro-5,6,7,8-tetrahydrobiopterin = (6R)-L-erythro-6,7-dihydrobiopterin + H2O. The sequence is that of Putative pterin-4-alpha-carbinolamine dehydratase from Mycobacterium leprae (strain Br4923).